A 123-amino-acid polypeptide reads, in one-letter code: Large ribosomal subunit protein bL12 (123 aa).

The protein belongs to the bacterial ribosomal protein bL12 family. As to quaternary structure, homodimer. Part of the ribosomal stalk of the 50S ribosomal subunit. Forms a multimeric L10(L12)X complex, where L10 forms an elongated spine to which 2 to 4 L12 dimers bind in a sequential fashion. Binds GTP-bound translation factors.

Its function is as follows. Forms part of the ribosomal stalk which helps the ribosome interact with GTP-bound translation factors. Is thus essential for accurate translation. The chain is Large ribosomal subunit protein bL12 from Mycoplasmopsis synoviae (strain 53) (Mycoplasma synoviae).